The primary structure comprises 351 residues: D-alanine--D-alanine ligase (351 aa).

The ATP-grasp domain occupies 141 to 349; the sequence is KAAFSAAGLP…ISQLVARLIE (209 aa). ATP is bound at residue 176–231; that stretch reads ETQLGYPCFIKPANLGSSVGISKAYDKKELLNGLDLAAQLDSRIVVEKNIKARELE. 3 residues coordinate Mg(2+): aspartate 302, glutamate 316, and asparagine 318.

The protein belongs to the D-alanine--D-alanine ligase family. Mg(2+) serves as cofactor. Requires Mn(2+) as cofactor.

It localises to the cytoplasm. The enzyme catalyses 2 D-alanine + ATP = D-alanyl-D-alanine + ADP + phosphate + H(+). The protein operates within cell wall biogenesis; peptidoglycan biosynthesis. Functionally, cell wall formation. The chain is D-alanine--D-alanine ligase from Prochlorococcus marinus (strain SARG / CCMP1375 / SS120).